A 141-amino-acid chain; its full sequence is ATP synthase epsilon chain (141 aa).

This sequence belongs to the ATPase epsilon chain family. F-type ATPases have 2 components, CF(1) - the catalytic core - and CF(0) - the membrane proton channel. CF(1) has five subunits: alpha(3), beta(3), gamma(1), delta(1), epsilon(1). CF(0) has three main subunits: a, b and c.

Its subcellular location is the cell membrane. Functionally, produces ATP from ADP in the presence of a proton gradient across the membrane. The protein is ATP synthase epsilon chain of Mycoplasma mobile (strain ATCC 43663 / 163K / NCTC 11711) (Mesomycoplasma mobile).